Consider the following 71-residue polypeptide: Protein DP71L (71 aa).

Important for host CHOP inhibition stretches follow at residues 16-18 and 57-61; these read VRF and LSAVL.

This sequence belongs to the asfivirus DP71L family. In terms of assembly, interacts (via C-terminus) with host PPP1CB.

Interacts with the host phosphatase PP1 catalytic subunit (PPP1CB) and recruits it to dephosphorylate EIF2S1/eIF2alpha and therefore restores the host translation that has been shut-down by the host. Also inhibits the EIF2S1/eIF2alpha-ATF4-DDIT3/CHOP pathway. The sequence is that of Protein DP71L from Ornithodoros (relapsing fever ticks).